Consider the following 288-residue polypeptide: Syntaxin-1A (288 aa).

Positions M1 to D13 are enriched in basic and acidic residues. Residues M1–V20 are disordered. At M1–K265 the chain is on the cytoplasmic side. Phosphoserine occurs at positions 14, 64, and 95. The stretch at D68–S109 forms a coiled coil. At S188 the chain carries Phosphoserine; by DAPK1. A t-SNARE coiled-coil homology domain is found at L192–A254. Glycyl lysine isopeptide (Lys-Gly) (interchain with G-Cter in SUMO) cross-links involve residues K252, K253, and K256. A helical; Anchor for type IV membrane protein transmembrane segment spans residues I266–G288.

It belongs to the syntaxin family. As to quaternary structure, part of the SNARE core complex containing SNAP25, VAMP2 and STX1A; this complex constitutes the basic catalytic machinery of the complex neurotransmitter release apparatus. The SNARE complex interacts with CPLX1. Interacts with STXBP1. The interaction with STXBP1 promotes assembly of the SNARE complex. Interacts (via C-terminus) with KCNB1 (via C-terminus); the interaction increases in a calcium-dependent manner and induces a pore-independent enhancement of exocytosis in neuroendocrine cells, chromaffin cells, pancreatic beta cells and from the soma of dorsal root ganglia (DRG) neurons. Interacts with SYTL4. Interacts with STXBP6. Interacts with PLCL1 (via C2 domain). Interacts with OTOF. Interacts with LGI3. Interacts (via the H3 domain) with SLC6A4 (via the N-terminus); this interaction regulates SLC4A6 channel conductance in thalamocortical neurons. Interacts with SYT6 and SYT8; the interaction is Ca(2+)-dependent. Interacts with VAMP8. Interacts with SNAP23. Interacts with VAPA and SYBU. Interacts with PRRT2. Interacts with SEPT8. Interacts with STXBP5L. Interacts with synaptotagmin-1/SYT1. Interacts with SEPTIN5; in the cerebellar cortex. Interacts with SEPTIN4; in the striatum. Post-translationally, phosphorylated by CK2. Phosphorylation at Ser-188 by DAPK1 significantly decreases its interaction with STXBP1. In terms of processing, (Microbial infection) Targeted and hydrolyzed by C.botulinum neurotoxin type C (BoNT/C), which hydrolyzes the 253-Lys-|-Ala-254 bond. Cleavage inhibits neurotransmitter release. Phosphorylated by CK2. Phosphorylation at Ser-188 by DAPK1 significantly decreases its interaction with STXBP1. Post-translationally, sumoylated, sumoylation is required for regulation of synaptic vesicle endocytosis. Expressed predominantly in cerebral cortex, hippocampus, cerebellum, adrenal medulla and retina with weak expression detected in non-neuronal tissues.

Its subcellular location is the cytoplasmic vesicle. The protein localises to the secretory vesicle. It is found in the synaptic vesicle membrane. The protein resides in the cell membrane. It localises to the synapse. Its subcellular location is the synaptosome. Functionally, plays an essential role in hormone and neurotransmitter calcium-dependent exocytosis and endocytosis. Part of the SNARE (Soluble NSF Attachment Receptor) complex composed of SNAP25, STX1A and VAMP2 which mediates the fusion of synaptic vesicles with the presynaptic plasma membrane. STX1A and SNAP25 are localized on the plasma membrane while VAMP2 resides in synaptic vesicles. The pairing of the three SNAREs from the N-terminal SNARE motifs to the C-terminal anchors leads to the formation of the SNARE complex, which brings membranes into close proximity and results in final fusion. Participates in the calcium-dependent regulation of acrosomal exocytosis in sperm. Also plays an important role in the exocytosis of hormones such as insulin or glucagon-like peptide 1 (GLP-1). The protein is Syntaxin-1A (Stx1a) of Rattus norvegicus (Rat).